The following is a 307-amino-acid chain: 4-hydroxythreonine-4-phosphate dehydrogenase (307 aa).

Substrate contacts are provided by His-126 and Thr-127. A divalent metal cation contacts are provided by His-156, His-195, and His-251. The substrate site is built by Lys-259, Asn-268, and Arg-277.

The protein belongs to the PdxA family. In terms of assembly, homodimer. Requires Zn(2+) as cofactor. Mg(2+) serves as cofactor. The cofactor is Co(2+).

The protein localises to the cytoplasm. The catalysed reaction is 4-(phosphooxy)-L-threonine + NAD(+) = 3-amino-2-oxopropyl phosphate + CO2 + NADH. It participates in cofactor biosynthesis; pyridoxine 5'-phosphate biosynthesis; pyridoxine 5'-phosphate from D-erythrose 4-phosphate: step 4/5. Functionally, catalyzes the NAD(P)-dependent oxidation of 4-(phosphooxy)-L-threonine (HTP) into 2-amino-3-oxo-4-(phosphooxy)butyric acid which spontaneously decarboxylates to form 3-amino-2-oxopropyl phosphate (AHAP). The polypeptide is 4-hydroxythreonine-4-phosphate dehydrogenase (Helicobacter pylori (strain HPAG1)).